The chain runs to 218 residues: GTP cyclohydrolase 1 (218 aa).

Cys109, His112, and Cys180 together coordinate Zn(2+).

It belongs to the GTP cyclohydrolase I family. Toroid-shaped homodecamer, composed of two pentamers of five dimers.

It carries out the reaction GTP + H2O = 7,8-dihydroneopterin 3'-triphosphate + formate + H(+). Its pathway is cofactor biosynthesis; 7,8-dihydroneopterin triphosphate biosynthesis; 7,8-dihydroneopterin triphosphate from GTP: step 1/1. This chain is GTP cyclohydrolase 1, found in Histophilus somni (strain 129Pt) (Haemophilus somnus).